The chain runs to 260 residues: HMP-PP phosphatase (260 aa).

The Nucleophile role is filled by D8. Positions 8, 10, and 212 each coordinate Mg(2+).

Belongs to the HAD-like hydrolase superfamily. Cof family. Mg(2+) serves as cofactor.

It carries out the reaction 4-amino-2-methyl-5-(diphosphooxymethyl)pyrimidine + H2O = 4-amino-2-methyl-5-(phosphooxymethyl)pyrimidine + phosphate + H(+). Catalyzes the hydrolysis of 4-amino-2-methyl-5-hydroxymethylpyrimidine pyrophosphate (HMP-PP) to 4-amino-2-methyl-5-hydroxymethylpyrimidine phosphate (HMP-P). The chain is HMP-PP phosphatase from Shigella boydii serotype 4 (strain Sb227).